Consider the following 185-residue polypeptide: Ribose 1,5-bisphosphate phosphokinase PhnN (185 aa).

An ATP-binding site is contributed by 13–20; that stretch reads GPSGAGKD.

The protein belongs to the ribose 1,5-bisphosphokinase family.

It carries out the reaction alpha-D-ribose 1,5-bisphosphate + ATP = 5-phospho-alpha-D-ribose 1-diphosphate + ADP. It participates in metabolic intermediate biosynthesis; 5-phospho-alpha-D-ribose 1-diphosphate biosynthesis; 5-phospho-alpha-D-ribose 1-diphosphate from D-ribose 5-phosphate (route II): step 3/3. Functionally, catalyzes the phosphorylation of ribose 1,5-bisphosphate to 5-phospho-D-ribosyl alpha-1-diphosphate (PRPP). In Chromobacterium violaceum (strain ATCC 12472 / DSM 30191 / JCM 1249 / CCUG 213 / NBRC 12614 / NCIMB 9131 / NCTC 9757 / MK), this protein is Ribose 1,5-bisphosphate phosphokinase PhnN.